We begin with the raw amino-acid sequence, 995 residues long: Serine-aspartate repeat-containing protein C (995 aa).

Positions 1–50 (MNNKKTATNRKGMIPNRLNKFSIRKYSVGTASILVGTTLIFGLSGHEAKA) are cleaved as a signal peptide. Positions 21–32 (FSIRKYSVGTAS) match the YSIRK-G/S signaling motif motif. Residues 51-164 (AEHTNGELNQ…STTPKTTTIK (114 aa)) are disordered. The interval 51-495 (AEHTNGELNQ…GSSTANGDQK (445 aa)) is ligand binding A region. Polar residues predominate over residues 56–71 (GELNQSKNETTAPSEN). A compositionally biased stretch (basic and acidic residues) spans 72–83 (KTTKKVDSRQLK). Positions 84 to 155 (DNTQTATADQ…SNLTQAKDVS (72 aa)) are enriched in polar residues. CNA-B domains are found at residues 496–606 (KYNL…YKTP) and 607–717 (KYSL…EEET). Residues 678-975 (TQTGTNTTED…NNSNNGTLFG (298 aa)) form a disordered region. 2 stretches are compositionally biased toward acidic residues: residues 685–695 (TEDDKDADGGE) and 712–934 (YYEE…DSDS). The LPXTG sorting signal signature appears at 958-962 (LPETG). Positions 960–975 (ETGSENNNSNNGTLFG) are enriched in low complexity. A Pentaglycyl murein peptidoglycan amidated threonine modification is found at threonine 961. Residues 962-995 (GSENNNSNNGTLFGGLFAALGSLLLFGRRKKQNK) constitute a propeptide, removed by sortase.

It belongs to the serine-aspartate repeat-containing protein (SDr) family. Homodimerizes; via N2-Domain. Interacts with host NRXN1; this interaction mediates bacterial attachment to host cells.

It localises to the secreted. It is found in the cell wall. In terms of biological role, cell surface-associated calcium-binding protein which plays an important role in adhesion and pathogenesis. Mediates interactions with components of the extracellular matrix such as host NRXN1 to promote bacterial adhesion. In Staphylococcus aureus (strain NCTC 8325 / PS 47), this protein is Serine-aspartate repeat-containing protein C (sdrC).